The primary structure comprises 149 residues: Small ribosomal subunit protein uS15 (149 aa).

Positions 1-14 are enriched in basic residues; the sequence is MGRMHTHRHGKSHS. A disordered region spans residues 1-20; it reads MGRMHTHRHGKSHSIRPATL.

This sequence belongs to the universal ribosomal protein uS15 family. As to quaternary structure, part of the 30S ribosomal subunit.

The sequence is that of Small ribosomal subunit protein uS15 from Nitrosopumilus maritimus (strain SCM1).